We begin with the raw amino-acid sequence, 418 residues long: Glutamyl-tRNA reductase (418 aa).

Substrate is bound by residues 49–52, Ser109, 114–116, and Gln120; these read TCNR and EPQ. Cys50 functions as the Nucleophile in the catalytic mechanism. 189-194 provides a ligand contact to NADP(+); sequence GAGETI.

This sequence belongs to the glutamyl-tRNA reductase family. Homodimer.

The enzyme catalyses (S)-4-amino-5-oxopentanoate + tRNA(Glu) + NADP(+) = L-glutamyl-tRNA(Glu) + NADPH + H(+). It participates in porphyrin-containing compound metabolism; protoporphyrin-IX biosynthesis; 5-aminolevulinate from L-glutamyl-tRNA(Glu): step 1/2. In terms of biological role, catalyzes the NADPH-dependent reduction of glutamyl-tRNA(Glu) to glutamate 1-semialdehyde (GSA). This is Glutamyl-tRNA reductase from Salmonella choleraesuis (strain SC-B67).